Reading from the N-terminus, the 396-residue chain is NADH-quinone oxidoreductase subunit D (396 aa).

The protein belongs to the complex I 49 kDa subunit family. NDH-1 is composed of 14 different subunits. Subunits NuoB, C, D, E, F, and G constitute the peripheral sector of the complex.

Its subcellular location is the cell inner membrane. The enzyme catalyses a quinone + NADH + 5 H(+)(in) = a quinol + NAD(+) + 4 H(+)(out). In terms of biological role, NDH-1 shuttles electrons from NADH, via FMN and iron-sulfur (Fe-S) centers, to quinones in the respiratory chain. The immediate electron acceptor for the enzyme in this species is believed to be ubiquinone. Couples the redox reaction to proton translocation (for every two electrons transferred, four hydrogen ions are translocated across the cytoplasmic membrane), and thus conserves the redox energy in a proton gradient. This Brucella abortus (strain S19) protein is NADH-quinone oxidoreductase subunit D.